A 209-amino-acid chain; its full sequence is Uracil phosphoribosyltransferase (209 aa).

5-phospho-alpha-D-ribose 1-diphosphate-binding positions include arginine 79, arginine 104, and 131–139; that span reads DPMLATGGS. Uracil is bound by residues isoleucine 194 and 199-201; that span reads GDA. Aspartate 200 lines the 5-phospho-alpha-D-ribose 1-diphosphate pocket.

The protein belongs to the UPRTase family. The cofactor is Mg(2+).

It catalyses the reaction UMP + diphosphate = 5-phospho-alpha-D-ribose 1-diphosphate + uracil. Its pathway is pyrimidine metabolism; UMP biosynthesis via salvage pathway; UMP from uracil: step 1/1. Its activity is regulated as follows. Allosterically activated by GTP. In terms of biological role, catalyzes the conversion of uracil and 5-phospho-alpha-D-ribose 1-diphosphate (PRPP) to UMP and diphosphate. The protein is Uracil phosphoribosyltransferase of Agathobacter rectalis (strain ATCC 33656 / DSM 3377 / JCM 17463 / KCTC 5835 / VPI 0990) (Eubacterium rectale).